Reading from the N-terminus, the 558-residue chain is Glucose-6-phosphate isomerase (558 aa).

N-acetylalanine is present on alanine 2. Lysine 12 is subject to N6-acetyllysine. Residues serine 86 and serine 107 each carry the phosphoserine modification. Lysine 142 carries the N6-acetyllysine modification. 159–160 (GS) lines the D-glucose 6-phosphate pocket. Residue serine 185 is modified to Phosphoserine; by CK2. Residue 210–215 (SKTFTT) participates in D-glucose 6-phosphate binding. Threonine 250 is modified (phosphothreonine). Residues glutamine 354, glutamate 358, and histidine 389 each coordinate D-glucose 6-phosphate. Catalysis depends on glutamate 358, which acts as the Proton donor. The active site involves histidine 389. Residue lysine 454 is modified to N6-acetyllysine; alternate. An N6-malonyllysine; alternate modification is found at lysine 454. Residue lysine 454 is modified to N6-succinyllysine; alternate. Serine 455 is subject to Phosphoserine. Position 519 (lysine 519) interacts with D-glucose 6-phosphate. The active site involves lysine 519.

The protein belongs to the GPI family. Homodimer; in the catalytically active form. Monomer in the secreted form. Phosphorylation at Ser-185 by CK2 has been shown to decrease enzymatic activity and may contribute to secretion by a non-classical secretory pathway. Post-translationally, ISGylated.

The protein resides in the cytoplasm. The protein localises to the secreted. The enzyme catalyses alpha-D-glucose 6-phosphate = beta-D-fructose 6-phosphate. It participates in carbohydrate degradation; glycolysis; D-glyceraldehyde 3-phosphate and glycerone phosphate from D-glucose: step 2/4. In the cytoplasm, catalyzes the conversion of glucose-6-phosphate to fructose-6-phosphate, the second step in glycolysis, and the reverse reaction during gluconeogenesis. Besides it's role as a glycolytic enzyme, also acts as a secreted cytokine: acts as an angiogenic factor (AMF) that stimulates endothelial cell motility. Acts as a neurotrophic factor, neuroleukin, for spinal and sensory neurons. It is secreted by lectin-stimulated T-cells and induces immunoglobulin secretion. The sequence is that of Glucose-6-phosphate isomerase from Rattus norvegicus (Rat).